The following is a 463-amino-acid chain: Glutamyl-tRNA(Gln) amidotransferase subunit A, mitochondrial (463 aa).

Active-site charge relay system residues include K47 and S124. S148 functions as the Acyl-ester intermediate in the catalytic mechanism.

It belongs to the amidase family. GatA subfamily. In terms of assembly, subunit of the heterotrimeric GatFAB amidotransferase (AdT) complex, composed of A, B and F subunits.

It is found in the mitochondrion. The catalysed reaction is L-glutamyl-tRNA(Gln) + L-glutamine + ATP + H2O = L-glutaminyl-tRNA(Gln) + L-glutamate + ADP + phosphate + H(+). Allows the formation of correctly charged Gln-tRNA(Gln) through the transamidation of misacylated Glu-tRNA(Gln) in the mitochondria. The reaction takes place in the presence of glutamine and ATP through an activated gamma-phospho-Glu-tRNA(Gln). The polypeptide is Glutamyl-tRNA(Gln) amidotransferase subunit A, mitochondrial (Eremothecium gossypii (strain ATCC 10895 / CBS 109.51 / FGSC 9923 / NRRL Y-1056) (Yeast)).